Consider the following 175-residue polypeptide: Ribosome maturation factor RimM (175 aa).

In terms of domain architecture, PRC barrel spans 98–175; that stretch reads EGEYYWHQLE…EMRVDWDADF (78 aa).

Belongs to the RimM family. As to quaternary structure, binds ribosomal protein uS19.

Its subcellular location is the cytoplasm. Its function is as follows. An accessory protein needed during the final step in the assembly of 30S ribosomal subunit, possibly for assembly of the head region. Essential for efficient processing of 16S rRNA. May be needed both before and after RbfA during the maturation of 16S rRNA. It has affinity for free ribosomal 30S subunits but not for 70S ribosomes. This chain is Ribosome maturation factor RimM, found in Pseudomonas aeruginosa (strain ATCC 15692 / DSM 22644 / CIP 104116 / JCM 14847 / LMG 12228 / 1C / PRS 101 / PAO1).